A 93-amino-acid polypeptide reads, in one-letter code: Pyrimidine/purine nucleoside phosphorylase (93 aa).

This sequence belongs to the nucleoside phosphorylase PpnP family.

The enzyme catalyses a purine D-ribonucleoside + phosphate = a purine nucleobase + alpha-D-ribose 1-phosphate. It catalyses the reaction adenosine + phosphate = alpha-D-ribose 1-phosphate + adenine. It carries out the reaction cytidine + phosphate = cytosine + alpha-D-ribose 1-phosphate. The catalysed reaction is guanosine + phosphate = alpha-D-ribose 1-phosphate + guanine. The enzyme catalyses inosine + phosphate = alpha-D-ribose 1-phosphate + hypoxanthine. It catalyses the reaction thymidine + phosphate = 2-deoxy-alpha-D-ribose 1-phosphate + thymine. It carries out the reaction uridine + phosphate = alpha-D-ribose 1-phosphate + uracil. The catalysed reaction is xanthosine + phosphate = alpha-D-ribose 1-phosphate + xanthine. Functionally, catalyzes the phosphorolysis of diverse nucleosides, yielding D-ribose 1-phosphate and the respective free bases. Can use uridine, adenosine, guanosine, cytidine, thymidine, inosine and xanthosine as substrates. Also catalyzes the reverse reactions. In Hahella chejuensis (strain KCTC 2396), this protein is Pyrimidine/purine nucleoside phosphorylase.